The sequence spans 453 residues: Pup--protein ligase (453 aa).

E9 contacts Mg(2+). An ATP-binding site is contributed by R53. Residue Y55 coordinates Mg(2+). The active-site Proton acceptor is the D57. E63 is a binding site for Mg(2+). Residues T66 and W420 each contribute to the ATP site.

The protein belongs to the Pup ligase/Pup deamidase family. Pup-conjugating enzyme subfamily.

It carries out the reaction ATP + [prokaryotic ubiquitin-like protein]-L-glutamate + [protein]-L-lysine = ADP + phosphate + N(6)-([prokaryotic ubiquitin-like protein]-gamma-L-glutamyl)-[protein]-L-lysine.. The protein operates within protein degradation; proteasomal Pup-dependent pathway. It functions in the pathway protein modification; protein pupylation. Its function is as follows. Catalyzes the covalent attachment of the prokaryotic ubiquitin-like protein modifier Pup to the proteasomal substrate proteins, thereby targeting them for proteasomal degradation. This tagging system is termed pupylation. The ligation reaction involves the side-chain carboxylate of the C-terminal glutamate of Pup and the side-chain amino group of a substrate lysine. This chain is Pup--protein ligase, found in Kribbella flavida (strain DSM 17836 / JCM 10339 / NBRC 14399).